The sequence spans 369 residues: MTQKTILNDTHRALGAKMVDFGGWDMPIHYGSQLDEHHQVRRDAGMFDVSHMTVVDLHGARVRAFLRDLLANSVDKLKVCGKALYTCMLNPQGGVIDDLIVYYMSEDFFRLVVNAATREKDLQWIGEQAVRFDVRVEERSDFAMIAVQGPNARANVIDLLDPADTAAASKLGRFAALQTRSRDGIELFLARTGYTGEDGFEIVLPQEAAVAFWNALLAQGVKPAGLGARDTLRLEAGMHLYGQDMDDAVTPYEAALAWTIALDEGRDFIGRRVLESQKAQGAPCQLIGVVMDDKGVLRHGQAVFTASGEGEILSGTFSPTLGKAIAFARVPAGSIDQLRVDIRGKQVPLRAVKFPFVRDGQAQPGVLGD.

The protein belongs to the GcvT family. The glycine cleavage system is composed of four proteins: P, T, L and H.

The enzyme catalyses N(6)-[(R)-S(8)-aminomethyldihydrolipoyl]-L-lysyl-[protein] + (6S)-5,6,7,8-tetrahydrofolate = N(6)-[(R)-dihydrolipoyl]-L-lysyl-[protein] + (6R)-5,10-methylene-5,6,7,8-tetrahydrofolate + NH4(+). In terms of biological role, the glycine cleavage system catalyzes the degradation of glycine. The chain is Aminomethyltransferase from Xanthomonas oryzae pv. oryzae (strain PXO99A).